The following is a 195-amino-acid chain: Myelin-associated neurite-outgrowth inhibitor (195 aa).

Topologically, residues 1–18 (MNPVYSPASSGVPYANPK) are cytoplasmic. The chain crosses the membrane as a helical span at residues 19 to 43 (GIGYPAGFPVGYAAAAPAYSPSMYP). The Extracellular segment spans residues 44-143 (GANPAFPSGY…APPIPPPRPN (100 aa)). Residues 144 to 163 (GVTMGMVGGTTMAMSAGTLL) traverse the membrane as a helical segment. Residues 164–195 (TTHSPTPVAPHPSMPTYRQPATPTYSYVPPQW) are Cytoplasmic-facing.

The protein belongs to the FAM168 family.

It localises to the cytoplasm. Its subcellular location is the perinuclear region. The protein resides in the cell membrane. The protein localises to the cell projection. It is found in the axon. In terms of biological role, inhibitor of neuronal axonal outgrowth. This Danio rerio (Zebrafish) protein is Myelin-associated neurite-outgrowth inhibitor (fam168b).